A 645-amino-acid polypeptide reads, in one-letter code: MLKFQEAAKCVSGSTAISTYPKTLIARRYVLQQKLGSGSFGTVYLVSDKKAKRGEELKVLKEISVGELNPNETVQANLEAQLLSKLDHPAIVKFHASFVEQDNFCIITEYCEGRDLDDKIQEYKQAGKIFPENQIIEWFIQLLLGVDYMHERRILHRDLKSKNVFLKNNLLKIGDFGVSRLLMGSCDLATTLTGTPHYMSPEALKHQGYDTKSDIWSLACILYEMCCMNHAFAGSNFLSIVLKIVEGDTPSLPERYPKELNAIMESMLNKNPSLRPSAIEILKIPYLDEQLQNLMCRYSEMTLEDKNLDCQKEAAHIINAMQKRIHLQTLRALSEVQKMTPRERMRLRKLQAADEKARKLKKIVEEKYEENSKRMQELRSRNFQQLSVDVLHEKTHLKGMEEKEEQPEGRLSCSPQDEDEERWQGREEESDEPTLENLPESQPIPSMDLHELESIVEDATSDLGYHEIPEDPLVAEEYYADAFDSYCEESDEEEEEIALERPEKEIRNEGSQPAYRTNQQDSDIEALARCLENVLGCTSLDTKTITTMAEDMSPGPPIFNSVMARTKMKRMRESAMQKLGTEVFEEVYNYLKRARHQNASEAEIRECLEKVVPQASDCFEVDQLLYFEEQLLITMGKEPTLQNHL.

In terms of domain architecture, Protein kinase spans Y29 to L287. ATP-binding positions include L35–V43 and K61. D158 (proton acceptor) is an active-site residue. S273 carries the post-translational modification Phosphoserine; by CHEK1. The stretch at R346 to Q385 forms a coiled coil. The tract at residues G399–P445 is disordered.

This sequence belongs to the protein kinase superfamily. NEK Ser/Thr protein kinase family. NIMA subfamily. As to quaternary structure, interacts with isoform 1 of NEK2. It depends on Mn(2+) as a cofactor. Mg(2+) serves as cofactor. In terms of processing, phosphorylated by NEK2. Phosphorylation at Ser-273 is important for its activation. In terms of tissue distribution, poorly expressed in cerebellum, trachea, lung, appendix, and uterus.

The protein resides in the nucleus. Its subcellular location is the nucleolus. It catalyses the reaction L-seryl-[protein] + ATP = O-phospho-L-seryl-[protein] + ADP + H(+). The enzyme catalyses L-threonyl-[protein] + ATP = O-phospho-L-threonyl-[protein] + ADP + H(+). Its activity is regulated as follows. Autorepressed by intramolecular binding of the C-terminus which dissociates following phosphorylation by NEK2 isoform 1 in G1/S-arrested cells. NEK2 isoform 2 is largely not present in the nucleolus, and does not appear to phosphorylate NEK11. Activated in response to DNA damage. Inhibited by zinc. In terms of biological role, protein kinase which plays an important role in the G2/M checkpoint response to DNA damage. Controls degradation of CDC25A by directly phosphorylating it on residues whose phosphorylation is required for BTRC-mediated polyubiquitination and degradation. The polypeptide is Serine/threonine-protein kinase Nek11 (Homo sapiens (Human)).